We begin with the raw amino-acid sequence, 1553 residues long: ABC-type transporter cctS (1553 aa).

Transmembrane regions (helical) follow at residues 27 to 47 (LIPL…YFHA), 90 to 110 (LEVA…IFSG), 114 to 134 (DLTS…ILFV), and 151 to 171 (SVLY…AILG). Asn176 carries an N-linked (GlcNAc...) asparagine glycan. 5 helical membrane-spanning segments follow: residues 177–197 (FTIA…FHWT), 286–306 (LLWQ…PPVL), 324–344 (TAWL…VAGC), 413–433 (GYLY…TYLL), and 438–458 (GISG…NILI). Residues 293–582 (ATLNSFAVFV…IADAITFLLR (290 aa)) form the ABC transmembrane type-1 1 domain. N-linked (GlcNAc...) asparagine glycosylation is present at Asn524. 2 helical membrane-spanning segments follow: residues 527 to 547 (TFFS…TVVW) and 550 to 570 (SMGT…RIPF). An N-linked (GlcNAc...) asparagine glycan is attached at Asn617. Residues 635 to 874 (NKRSDIQLTE…GRIDADIMQN (240 aa)) form the ABC transporter 1 domain. 670–677 (GPSGSGKS) is a binding site for ATP. Asn725 is a glycosylation site (N-linked (GlcNAc...) asparagine). A helical membrane pass occupies residues 948 to 970 (WYWVLVLFMFGIQQFISLATNIW). Residues 951–1255 (VLVLFMFGIQ…FVQLYAIVQQ (305 aa)) enclose the ABC transmembrane type-1 2 domain. Asn992 carries N-linked (GlcNAc...) asparagine glycosylation. Residues 1017-1037 (IYVAICLAYAFFTFARDLIVF) traverse the membrane as a helical segment. A glycan (N-linked (GlcNAc...) asparagine) is linked at Asn1085. 4 helical membrane-spanning segments follow: residues 1086–1108 (ISTF…VFIS), 1113–1135 (AFLI…FING), 1204–1224 (FLGS…LESV), and 1229–1249 (AALV…FVQL). One can recognise an ABC transporter 2 domain in the interval 1294 to 1533 (VRFDAYTTRY…DDDGIFRRLC (240 aa)). Position 1328 to 1335 (1328 to 1335 (GRTGAGKS)) interacts with ATP.

It belongs to the ABC transporter superfamily.

It is found in the membrane. The protein operates within mycotoxin biosynthesis. ABC-type transporter; part of the gene cluster that mediates the biosynthesis of the mycotoxin cyclochlorotine, a hepatotoxic and carcinogenic cyclic chlorinated pentapeptide. CctS is essential for the biosynthesis of cyclochlorotine, maybe as a chloride channel that supplies chloride for chlorination by cctP2. This Talaromyces islandicus (Penicillium islandicum) protein is ABC-type transporter cctS.